A 255-amino-acid chain; its full sequence is Expansin-A25 (255 aa).

An N-terminal signal peptide occupies residues 1–26 (MEYAILFATSLVITVLAASGFAPAHG). Residues 45–160 (GGACGYGNLY…QQVKCWRQGG (116 aa)) form the Expansin-like EG45 domain. Residues 170-249 (FFELVLVSNV…WWSFGMTFTS (80 aa)) form the Expansin-like CBD domain.

The protein belongs to the expansin family. Expansin A subfamily. Expressed in panicles and flowers.

It is found in the secreted. The protein localises to the cell wall. Its subcellular location is the membrane. Its function is as follows. May cause loosening and extension of plant cell walls by disrupting non-covalent bonding between cellulose microfibrils and matrix glucans. No enzymatic activity has been found. May be required for rapid internodal elongation in deepwater rice during submergence. The chain is Expansin-A25 (EXPA25) from Oryza sativa subsp. japonica (Rice).